We begin with the raw amino-acid sequence, 320 residues long: Cytochrome f (320 aa).

Residues 1–35 (MENRNTFSWVKEQMTRSISVSIMIYVITRTSISNA) form the signal peptide. Residues Y36, C56, C59, and H60 each coordinate heme. Residues 286 to 306 (VQGLLFFFASVILAQVFLVLK) traverse the membrane as a helical segment.

The protein belongs to the cytochrome f family. As to quaternary structure, the 4 large subunits of the cytochrome b6-f complex are cytochrome b6, subunit IV (17 kDa polypeptide, petD), cytochrome f and the Rieske protein, while the 4 small subunits are PetG, PetL, PetM and PetN. The complex functions as a dimer. The cofactor is heme.

The protein localises to the plastid. The protein resides in the chloroplast thylakoid membrane. In terms of biological role, component of the cytochrome b6-f complex, which mediates electron transfer between photosystem II (PSII) and photosystem I (PSI), cyclic electron flow around PSI, and state transitions. The sequence is that of Cytochrome f from Oryza nivara (Indian wild rice).